A 159-amino-acid chain; its full sequence is NAD(P)H-quinone oxidoreductase subunit J, chloroplastic (159 aa).

This sequence belongs to the complex I 30 kDa subunit family. In terms of assembly, NDH is composed of at least 16 different subunits, 5 of which are encoded in the nucleus.

It localises to the plastid. The protein resides in the chloroplast thylakoid membrane. The catalysed reaction is a plastoquinone + NADH + (n+1) H(+)(in) = a plastoquinol + NAD(+) + n H(+)(out). It catalyses the reaction a plastoquinone + NADPH + (n+1) H(+)(in) = a plastoquinol + NADP(+) + n H(+)(out). Functionally, NDH shuttles electrons from NAD(P)H:plastoquinone, via FMN and iron-sulfur (Fe-S) centers, to quinones in the photosynthetic chain and possibly in a chloroplast respiratory chain. The immediate electron acceptor for the enzyme in this species is believed to be plastoquinone. Couples the redox reaction to proton translocation, and thus conserves the redox energy in a proton gradient. The chain is NAD(P)H-quinone oxidoreductase subunit J, chloroplastic from Triticum aestivum (Wheat).